Reading from the N-terminus, the 304-residue chain is Beta-lactamase AER-1 (304 aa).

A signal peptide spans 1–37 (MYVLSVEKPTLRNKFAAGIGVVLVCVVASFIPTPVFA). Ser83 serves as the catalytic Acyl-ester intermediate. A disulfide bridge links Cys90 with Cys137. The segment at 173–195 (ETQLDRKEPELNEGTPGDVRDTT) is disordered. Position 248 to 250 (248 to 250 (KTG)) interacts with substrate.

The protein belongs to the class-A beta-lactamase family.

It carries out the reaction a beta-lactam + H2O = a substituted beta-amino acid. Hydrolyzes carbenicillin. Methicillin and oxacillin are weakly hydrolyzed. In Aeromonas hydrophila, this protein is Beta-lactamase AER-1 (aer1).